The sequence spans 600 residues: tRNA uridine 5-carboxymethylaminomethyl modification enzyme MnmG (600 aa).

10–15 (GGGHAG) provides a ligand contact to FAD. The segment at 216 to 239 (ADPQPRGFTGTPGPRAAESPTWQT) is disordered. 267–281 (GPRYCPSIEDKVVKF) contacts NAD(+).

It belongs to the MnmG family. As to quaternary structure, homodimer. Heterotetramer of two MnmE and two MnmG subunits. Requires FAD as cofactor.

The protein localises to the cytoplasm. NAD-binding protein involved in the addition of a carboxymethylaminomethyl (cmnm) group at the wobble position (U34) of certain tRNAs, forming tRNA-cmnm(5)s(2)U34. The chain is tRNA uridine 5-carboxymethylaminomethyl modification enzyme MnmG from Deinococcus radiodurans (strain ATCC 13939 / DSM 20539 / JCM 16871 / CCUG 27074 / LMG 4051 / NBRC 15346 / NCIMB 9279 / VKM B-1422 / R1).